The following is a 326-amino-acid chain: Putative HTH-type transcriptional regulatory protein MmarC5_0898 (326 aa).

Residues 128–183 (LRETREKLKISVGELAEISRVSRKTIYKYEQNEANPSAEVAIKIEEYLDVPLIKGI) form the HTH cro/C1-type domain. The H-T-H motif DNA-binding region spans 139-158 (VGELAEISRVSRKTIYKYEQ).

This is Putative HTH-type transcriptional regulatory protein MmarC5_0898 from Methanococcus maripaludis (strain C5 / ATCC BAA-1333).